A 346-amino-acid chain; its full sequence is UDP-N-acetylenolpyruvoylglucosamine reductase (346 aa).

One can recognise an FAD-binding PCMH-type domain in the interval 18 to 189 (LHAQARAFIA…VSVVFALKTH (172 aa)). The active site involves Arg165. Ser240 functions as the Proton donor in the catalytic mechanism. Glu336 is a catalytic residue.

The protein belongs to the MurB family. The cofactor is FAD.

It localises to the cytoplasm. The catalysed reaction is UDP-N-acetyl-alpha-D-muramate + NADP(+) = UDP-N-acetyl-3-O-(1-carboxyvinyl)-alpha-D-glucosamine + NADPH + H(+). The protein operates within cell wall biogenesis; peptidoglycan biosynthesis. In terms of biological role, cell wall formation. The chain is UDP-N-acetylenolpyruvoylglucosamine reductase from Neisseria gonorrhoeae (strain ATCC 700825 / FA 1090).